Here is a 60-residue protein sequence, read N- to C-terminus: Metallothionein (60 aa).

A beta region spans residues 1 to 28 (MDPCECSKTGNCTCGGSCTCKNCSCTSC). A divalent metal cation-binding residues include C4, C6, C12, C14, C18, C20, C23, C25, C28, C32, C33, C35, C36, C40, C43, C47, C49, C54, C58, and C59. Residues 29 to 60 (KKSCCSCCPSGCSKCASGCVCKGKTCDTSCCQ) form an alpha region.

Belongs to the metallothionein superfamily. Type 1 family.

Its function is as follows. Metallothioneins have a high content of cysteine residues that bind various heavy metals. The polypeptide is Metallothionein (mt) (Gobiomorphus cotidianus (New Zealand common bully)).